Here is a 900-residue protein sequence, read N- to C-terminus: Alanine--tRNA ligase (900 aa).

Residues His-604, His-608, Cys-708, and His-712 each contribute to the Zn(2+) site.

This sequence belongs to the class-II aminoacyl-tRNA synthetase family. It depends on Zn(2+) as a cofactor.

It localises to the cytoplasm. The enzyme catalyses tRNA(Ala) + L-alanine + ATP = L-alanyl-tRNA(Ala) + AMP + diphosphate. Functionally, catalyzes the attachment of alanine to tRNA(Ala) in a two-step reaction: alanine is first activated by ATP to form Ala-AMP and then transferred to the acceptor end of tRNA(Ala). Also edits incorrectly charged Ser-tRNA(Ala) and Gly-tRNA(Ala) via its editing domain. The protein is Alanine--tRNA ligase of Saccharolobus islandicus (strain M.14.25 / Kamchatka #1) (Sulfolobus islandicus).